We begin with the raw amino-acid sequence, 279 residues long: Lacto-N-neotetraose biosynthesis glycosyltransferase LgtB (279 aa).

This sequence belongs to the glycosyltransferase 25 family.

Its pathway is glycan metabolism; lacto-N-neotetraose biosynthesis. The protein operates within bacterial outer membrane biogenesis; lipooligosaccharide biosynthesis. Its function is as follows. Adds the second galactose to the lacto-N-tetraose chain in lipooligosaccharide (LOS). This Neisseria gonorrhoeae protein is Lacto-N-neotetraose biosynthesis glycosyltransferase LgtB (lgtB).